We begin with the raw amino-acid sequence, 356 residues long: GDSL esterase/lipase At2g36325 (356 aa).

The N-terminal stretch at 1-26 is a signal peptide; the sequence is MNITKLTPWFLFSCLILLSDYIKVNS. N-linked (GlcNAc...) asparagine glycosylation occurs at Asn-25. Ser-54 functions as the Nucleophile in the catalytic mechanism. Asn-165, Asn-185, and Asn-240 each carry an N-linked (GlcNAc...) asparagine glycan. Residues Asp-334 and His-337 contribute to the active site.

The protein belongs to the 'GDSL' lipolytic enzyme family.

Its subcellular location is the secreted. The polypeptide is GDSL esterase/lipase At2g36325 (Arabidopsis thaliana (Mouse-ear cress)).